The sequence spans 349 residues: Hydroxymethylglutaryl-CoA synthase (349 aa).

(3S)-3-hydroxy-3-methylglutaryl-CoA contacts are provided by aspartate 29 and alanine 30. The active-site Proton donor/acceptor is the glutamate 81. The (3S)-3-hydroxy-3-methylglutaryl-CoA site is built by cysteine 113 and threonine 154. Cysteine 113 serves as the catalytic Acyl-thioester intermediate. Arginine 202 is a CoA binding site. Positions 204 and 237 each coordinate (3S)-3-hydroxy-3-methylglutaryl-CoA. Histidine 237 functions as the Proton donor/acceptor in the catalytic mechanism. A CoA-binding site is contributed by lysine 242. (3S)-3-hydroxy-3-methylglutaryl-CoA is bound by residues lysine 246, asparagine 269, and serine 299.

It belongs to the thiolase-like superfamily. Archaeal HMG-CoA synthase family. As to quaternary structure, interacts with acetoacetyl-CoA thiolase that catalyzes the precedent step in the pathway and with a DUF35 protein. The acetoacetyl-CoA thiolase/HMG-CoA synthase complex channels the intermediate via a fused CoA-binding site, which allows for efficient coupling of the endergonic thiolase reaction with the exergonic HMGCS reaction.

The catalysed reaction is acetoacetyl-CoA + acetyl-CoA + H2O = (3S)-3-hydroxy-3-methylglutaryl-CoA + CoA + H(+). It participates in metabolic intermediate biosynthesis; (R)-mevalonate biosynthesis; (R)-mevalonate from acetyl-CoA: step 2/3. Functionally, catalyzes the condensation of acetyl-CoA with acetoacetyl-CoA to form 3-hydroxy-3-methylglutaryl-CoA (HMG-CoA). Functions in the mevalonate (MVA) pathway leading to isopentenyl diphosphate (IPP), a key precursor for the biosynthesis of isoprenoid compounds that are building blocks of archaeal membrane lipids. The chain is Hydroxymethylglutaryl-CoA synthase from Methanosarcina acetivorans (strain ATCC 35395 / DSM 2834 / JCM 12185 / C2A).